The following is a 332-amino-acid chain: Small ribosomal subunit protein uS2 (332 aa).

The protein belongs to the universal ribosomal protein uS2 family.

The protein is Small ribosomal subunit protein uS2 of Afipia carboxidovorans (strain ATCC 49405 / DSM 1227 / KCTC 32145 / OM5) (Oligotropha carboxidovorans).